We begin with the raw amino-acid sequence, 425 residues long: Polyadenylate-binding protein RBP47B' (425 aa).

3 consecutive RRM domains span residues 24 to 102, 116 to 195, and 237 to 309; these read RTLW…LNWA, HSIF…AATP, and TTIS…WSKN.

This sequence belongs to the polyadenylate-binding RBP47 family. As to quaternary structure, interacts with the poly(A) tail of mRNA in nucleus.

Its subcellular location is the nucleus. It localises to the cytoplasmic granule. Its function is as follows. Heterogeneous nuclear ribonucleoprotein (hnRNP)-protein binding the poly(A) tail of mRNA and probably involved in some steps of pre-mRNA maturation. The protein is Polyadenylate-binding protein RBP47B' (RBP47B') of Arabidopsis thaliana (Mouse-ear cress).